The chain runs to 322 residues: 8-oxo-(d)GTP phosphatase (322 aa).

Positions 1-21 (MMPVDDLQEIPLSKDTTEKSK) are disordered. Positions 22 to 156 (HTVRAAGAVL…DDRKVLRRFV (135 aa)) constitute a Nudix hydrolase domain. Residues 55 to 58 (RPRY), Asp60, and 65 to 67 (KGK) contribute to the substrate site. Residues Lys65, Glu81, and Glu85 each coordinate Mg(2+). The Nudix box signature appears at 66–87 (GKLDQGETEPVAAAREIHEETG). Substrate is bound by residues Tyr101, Lys108, Glu127, and Tyr145. Residue Glu127 coordinates Mg(2+).

Belongs to the Nudix hydrolase family. In terms of assembly, forms head-to-tail homodimers. Requires Mg(2+) as cofactor.

The catalysed reaction is 8-oxo-dGTP + H2O = 8-oxo-dGDP + phosphate + H(+). It carries out the reaction 8-oxo-GTP + H2O = 8-oxo-GDP + phosphate + H(+). The enzyme catalyses 8-oxo-dGDP + H2O = 8-oxo-dGMP + phosphate + H(+). It catalyses the reaction 8-oxo-GDP + H2O = 8-oxo-GMP + phosphate + H(+). The catalysed reaction is P(1),P(6)-bis(5'-adenosyl) hexaphosphate + H2O = 2 ATP + 2 H(+). It carries out the reaction P(1),P(5)-bis(5'-adenosyl) pentaphosphate + H2O = ADP + ATP + 2 H(+). The enzyme catalyses P(1),P(4)-bis(5'-adenosyl) tetraphosphate + H2O = AMP + ATP + 2 H(+). Its activity is regulated as follows. Ap4A hydrolysis is inhibited by fluoride ions. In terms of biological role, catalyzes the conversion of 8-oxo-dGTP to 8-oxo-dGDP, and 8-oxo-GTP to 8-oxo-GDP. At high enzyme concentrations, can also catalyze the conversion of 8-oxo-dGDP to 8-oxo-dGMP, and 8-oxo-GDP to 8-oxo-GMP. In addition, catalyzes the hydrolysis of the diadenosine polyphosphates diadenosine hexaphosphate (Ap6A), diadenosine pentaphosphate (Ap5A) and diadenosine tetraphosphate (Ap4A). This chain is 8-oxo-(d)GTP phosphatase, found in Mycolicibacterium smegmatis (strain ATCC 700084 / mc(2)155) (Mycobacterium smegmatis).